The chain runs to 20 residues: Transcriptional regulatory protein PufK (20 aa).

A compositionally biased stretch (basic residues) spans 1-11 (MVPYRNPRHQH). The interval 1–20 (MVPYRNPRHQHVASVLRSGG) is disordered.

In terms of biological role, involved in the transcriptional regulation of pufB. The polypeptide is Transcriptional regulatory protein PufK (pufK) (Cereibacter sphaeroides (strain ATCC 17023 / DSM 158 / JCM 6121 / CCUG 31486 / LMG 2827 / NBRC 12203 / NCIMB 8253 / ATH 2.4.1.) (Rhodobacter sphaeroides)).